A 483-amino-acid polypeptide reads, in one-letter code: MKVPRCMSTQHPDNVNPPFFAEEPELGGEDEIREAYYVFSHLGCDEQMWDCEGKEVDNYVVKKLLTKYQAFFRDHVLGEDLRLTLRVPNPTVERAEAKILLETLESIPRSYDTASLFYGMDAAPVFEVILPMTSSSSCLNRIHSYYLDFVKGKERLQLADGVTVKEWIGEFRPDEINVIPLFEDHEGMLNAAKITGEYLDGKDIQEQRVFLARSDPAMNYGMISATLLNRIALSDFRDLEEESGVKLYPIIGMGSAPFRGNLRPDNVEDVTWEYRGAYTFTVQSSFKYDHEPSDVIRGIKKLRSVKPGRAAEIERESVLEIISAYCREYRRQVMDLVDIINRVARYVPGRRKRKLHIGLFGYSRSMGNVSLPRAITFTAALYSLGVPPELLGFNALSSGDLEFIEEVYPGLGRDLHDAARYANPESPFLSPEVKSSFEEYLEPEYDEGHMKTTEEIIRALRINRTANLQELILEAASQRKFLG.

Positions 1 to 20 (MKVPRCMSTQHPDNVNPPFF) are disordered.

Belongs to the PEPCase type 2 family. As to quaternary structure, homotetramer. The cofactor is Mg(2+).

It catalyses the reaction oxaloacetate + phosphate = phosphoenolpyruvate + hydrogencarbonate. With respect to regulation, inhibited by NaCl, KCl, ATP, ADP, GTP and aspartate. Unlike E.coli, not regulated by acetyl-CoA. In terms of biological role, catalyzes the irreversible beta-carboxylation of phosphoenolpyruvate (PEP) to form oxaloacetate (OAA), a four-carbon dicarboxylic acid source for the tricarboxylic acid cycle. The protein is Phosphoenolpyruvate carboxylase (ppcA) of Methanothermobacter thermautotrophicus (strain ATCC 29096 / DSM 1053 / JCM 10044 / NBRC 100330 / Delta H) (Methanobacterium thermoautotrophicum).